The primary structure comprises 430 residues: Cytochrome c biogenesis protein CcsB (430 aa).

The next 3 membrane-spanning stretches (helical) occupy residues 14-34 (LRIA…GTAI), 72-92 (SSWF…CSWR), and 162-182 (AGPM…VWGS).

Belongs to the Ccs1/CcsB family. In terms of assembly, may interact with CcsA.

It localises to the cellular thylakoid membrane. Functionally, required during biogenesis of c-type cytochromes (cytochrome c6 and cytochrome f) at the step of heme attachment. This Prochlorococcus marinus (strain MIT 9313) protein is Cytochrome c biogenesis protein CcsB.